The sequence spans 585 residues: Arginine--tRNA ligase (585 aa).

The short motif at alanine 131–histidine 141 is the 'HIGH' region element.

It belongs to the class-I aminoacyl-tRNA synthetase family. Monomer.

Its subcellular location is the cytoplasm. The enzyme catalyses tRNA(Arg) + L-arginine + ATP = L-arginyl-tRNA(Arg) + AMP + diphosphate. The polypeptide is Arginine--tRNA ligase (Rhizobium meliloti (strain 1021) (Ensifer meliloti)).